A 292-amino-acid chain; its full sequence is Probable vesicular-fusion protein sec17 homolog (292 aa).

This sequence belongs to the SNAP family.

Its subcellular location is the membrane. Functionally, required for vesicular transport between the endoplasmic reticulum and the Golgi apparatus. This is Probable vesicular-fusion protein sec17 homolog from Neurospora crassa (strain ATCC 24698 / 74-OR23-1A / CBS 708.71 / DSM 1257 / FGSC 987).